A 737-amino-acid polypeptide reads, in one-letter code: Palmitoyltransferase akr1 (737 aa).

A compositionally biased stretch (low complexity) spans 1–15 (MSSGNSSTGTHTNGN). The disordered stretch occupies residues 1-39 (MSSGNSSTGTHTNGNFATLGSSPPSAVGGKGRAIPPKVT). Topologically, residues 1–313 (MSSGNSSTGT…WVRNKSLMSK (313 aa)) are cytoplasmic. ANK repeat units lie at residues 96–125 (EGITPLHWAAINNQYAMCKFLLDSGADVNA), 130–159 (SVATPAMWAAQRCHYYIVHLLLQRGADPLL), 163–192 (QGYNILHLATIDGNAFLLVLLLHQEIPVDV), 196–225 (QGHTGLMWAAYKGYPALVDLFLRWGAHANA), and 228–258 (EGGLTPLHWALVKGSLPCVLKLIEYGADKFA). The next 2 membrane-spanning stretches (helical) occupy residues 314 to 334 (FFFLWPFAIVFAAVWILSNMV) and 335 to 355 (VYAAIPMMLVTVFGLQWVAQK). At 356-374 (AASQGPSEYRILQKTPYLS) the chain is on the cytoplasmic side. A helical transmembrane segment spans residues 375-395 (GVFAGSLFWVGFRYVFYVLPV). Over 396–401 (TYSTSP) the chain is Lumenal. Residues 402–422 (ILNGLFAIFFSLTTYFYIYSM) traverse the membrane as a helical segment. The Cytoplasmic portion of the chain corresponds to 423 to 498 (VEDPGFVPKL…DNCVGANNLR (76 aa)). The DHHC domain occupies 455–505 (NFCVSCMVRRPLRSKHCKRCARCVAKHDHHCPWIDNCVGANNLRHFVLYIT). The active-site S-palmitoyl cysteine intermediate is the Cys485. A helical membrane pass occupies residues 499-519 (HFVLYITCLEVGIVLFVQLTF). Residues 520–548 (NYINSLPAPAQPQCNIINETLCDFVLRDT) lie on the Lumenal side of the membrane. Residues 549–569 (FTLVLDLWVCIQLVWITMLVA) traverse the membrane as a helical segment. Over 570–737 (VQMIQISRNQ…LSVEDPEQGV (168 aa)) the chain is Cytoplasmic.

The protein belongs to the DHHC palmitoyltransferase family. AKR/ZDHHC17 subfamily.

The protein resides in the early endosome membrane. Its subcellular location is the golgi apparatus membrane. It catalyses the reaction L-cysteinyl-[protein] + hexadecanoyl-CoA = S-hexadecanoyl-L-cysteinyl-[protein] + CoA. In terms of biological role, palmitoyltransferase specific for casein kinase 1. This is Palmitoyltransferase akr1 (akr1) from Aspergillus oryzae (strain ATCC 42149 / RIB 40) (Yellow koji mold).